Reading from the N-terminus, the 44-residue chain is Photosystem I reaction center subunit IX (44 aa).

The helical transmembrane segment at 7-27 threads the bilayer; it reads YLSTAPVLATLWFGSLAGLLI.

Belongs to the PsaJ family.

Its subcellular location is the plastid. It is found in the chloroplast thylakoid membrane. Functionally, may help in the organization of the PsaE and PsaF subunits. This chain is Photosystem I reaction center subunit IX, found in Cycas taitungensis (Prince sago).